Here is a 365-residue protein sequence, read N- to C-terminus: Aminomethyltransferase (365 aa).

It belongs to the GcvT family. In terms of assembly, the glycine cleavage system is composed of four proteins: P, T, L and H.

The catalysed reaction is N(6)-[(R)-S(8)-aminomethyldihydrolipoyl]-L-lysyl-[protein] + (6S)-5,6,7,8-tetrahydrofolate = N(6)-[(R)-dihydrolipoyl]-L-lysyl-[protein] + (6R)-5,10-methylene-5,6,7,8-tetrahydrofolate + NH4(+). The glycine cleavage system catalyzes the degradation of glycine. The chain is Aminomethyltransferase from Bacillus pumilus (strain SAFR-032).